The primary structure comprises 985 residues: Regulator of telomere elongation helicase 1 homolog (985 aa).

Residues 7-303 (AGIPVHFPFE…QDMAGDEPKD (297 aa)) form the Helicase ATP-binding domain. Residue 42-49 (SPTGTGKT) coordinates ATP. The [4Fe-4S] cluster site is built by Cys-146, Cys-164, Cys-173, and Cys-209. The short motif at 252–255 (DEAH) is the DEAH box element. At Thr-874 the chain carries Phosphothreonine.

Belongs to the helicase family. RAD3/XPD subfamily.

The protein resides in the nucleus. It carries out the reaction ATP + H2O = ADP + phosphate + H(+). A probable ATP-dependent DNA helicase implicated in DNA repair and the maintenance of genomic stability. Acts as an anti-recombinase to counteract toxic recombination and limit crossover during meiosis. Regulates meiotic recombination and crossover homeostasis by physically dissociating strand invasion events and thereby promotes noncrossover repair by meiotic synthesis dependent strand annealing (SDSA) as well as disassembly of D loop recombination intermediates. This Drosophila erecta (Fruit fly) protein is Regulator of telomere elongation helicase 1 homolog.